A 445-amino-acid polypeptide reads, in one-letter code: Glutamate--tRNA ligase 2 (445 aa).

A 'HIGH' region motif is present at residues 10-20 (PSPTGRLHVGN). The 'KMSKS' region motif lies at 241-245 (ALSKR). Lys-244 is a binding site for ATP.

Belongs to the class-I aminoacyl-tRNA synthetase family. Glutamate--tRNA ligase type 1 subfamily. Monomer.

It is found in the cytoplasm. It catalyses the reaction tRNA(Glu) + L-glutamate + ATP = L-glutamyl-tRNA(Glu) + AMP + diphosphate. Its function is as follows. Catalyzes the attachment of glutamate to tRNA(Glu) in a two-step reaction: glutamate is first activated by ATP to form Glu-AMP and then transferred to the acceptor end of tRNA(Glu). This is Glutamate--tRNA ligase 2 from Hyphomonas neptunium (strain ATCC 15444).